Here is a 486-residue protein sequence, read N- to C-terminus: Deleted in azoospermia protein 3 (486 aa).

A compositionally biased stretch (polar residues) spans 1 to 10 (MSAANPETPN). The interval 1 to 27 (MSAANPETPNSTISREASTQSSSAAAS) is disordered. The segment covering 11–27 (STISREASTQSSSAAAS) has biased composition (low complexity). Positions 40-115 (NTVFVGGIDA…KKLKLGPAIR (76 aa)) constitute an RRM domain. 12 consecutive DAZ domains span residues 167 to 190 (AYSA…YNYQ), 191 to 214 (EYPT…YNYQ), 215 to 238 (PFPA…YNYQ), 239 to 262 (AFPA…YNYQ), 263 to 286 (PFPA…YNYQ), 287 to 310 (AFPA…YNYQ), 311 to 334 (AFPA…YNYQ), 335 to 358 (AFPA…YNYQ), 359 to 382 (AFPA…YNYQ), 383 to 406 (AFPA…YNYQ), 407 to 430 (AFPA…YNYQ), and 431 to 454 (AFPA…YNYQ).

This sequence belongs to the RRM DAZ family. In terms of assembly, forms a heterodimer with BOLL and DAZL. Interacts with PUM2, DAZAP1, DAZAP2, DZIP1 and DZIP3. As to expression, testis specific.

It is found in the cytoplasm. It localises to the nucleus. In terms of biological role, RNA-binding protein that plays an essential role in spermatogenesis. May act by binding to the 3'-UTR of mRNAs and regulating their translation. This Homo sapiens (Human) protein is Deleted in azoospermia protein 3 (DAZ3).